The sequence spans 146 residues: Large ribosomal subunit protein uL15 (146 aa).

A compositionally biased stretch (basic and acidic residues) spans 1–13 (MKLHELRPAEGSR). The interval 1–55 (MKLHELRPAEGSRKSPKRVGRGTGSGLGKTSARGENGQNSRSGGGVRPGFEGGQM) is disordered. The segment covering 42 to 52 (SGGGVRPGFEG) has biased composition (gly residues).

This sequence belongs to the universal ribosomal protein uL15 family. Part of the 50S ribosomal subunit.

Binds to the 23S rRNA. The sequence is that of Large ribosomal subunit protein uL15 from Clostridium tetani (strain Massachusetts / E88).